The sequence spans 466 residues: Muscarinic acetylcholine receptor M2 (466 aa).

Residues 1 to 22 (MNNSTNSSNNSLALTSPYKTFE) are Extracellular-facing. N-linked (GlcNAc...) asparagine glycosylation is found at Asn2, Asn3, Asn6, and Asn9. The chain crosses the membrane as a helical span at residues 23–45 (VVFIVLVAGSLSLVTIIGNILVM). Residues 46-59 (VSIKVNRHLQTVNN) are Cytoplasmic-facing. A helical membrane pass occupies residues 60–80 (YFLFSLACADLIIGVFSMNLY). At 81–97 (TLYTVIGYWPLGPVVCD) the chain is on the extracellular side. A disulfide bridge links Cys96 with Cys176. The helical transmembrane segment at 98–119 (LWLALDYVVSNASVMNLLIISF) threads the bilayer. The Important for signaling signature appears at 120 to 122 (DRY). Topologically, residues 120–139 (DRYFCVTKPLTYPVKRTTKM) are cytoplasmic. A helical membrane pass occupies residues 140-162 (AGMMIAAAWVLSFILWAPAILFW). At 163-184 (QFIVGVRTVEDGECYIQFFSNA) the chain is on the extracellular side. Residues 185–209 (AVTFGTAIAAFYLPVIIMTVLYWHI) form a helical membrane-spanning segment. At 210–387 (SRASKSRIKK…PPSREKKVTR (178 aa)) the chain is on the cytoplasmic side. Residues 218-355 (KKDKKEPVAN…VVGSSGQNGD (138 aa)) are disordered. Residue Ser232 is modified to Phosphoserine. Positions 254–270 (GLEHNKIQNGKAPRDPV) are enriched in basic and acidic residues. Polar residues-rich tracts occupy residues 284 to 293 (NDSTSVSAVA), 304 to 313 (DENTVSTSLG), and 334 to 353 (SDSC…SGQN). The helical transmembrane segment at 388–410 (TILAILLAFIITWAPYNVMVLIN) threads the bilayer. Over 411-418 (TFCAPCIP) the chain is Extracellular. The cysteines at positions 413 and 416 are disulfide-linked. A helical transmembrane segment spans residues 419–442 (NTVWTIGYWLCYINSTINPACYAL). Residues 436–440 (NPACY) carry the Important for signaling motif. At 443–466 (CNATFKKTFKHLLMCHYKNIGATR) the chain is on the cytoplasmic side. Thr446, Thr450, and Thr465 each carry phosphothreonine.

Belongs to the G-protein coupled receptor 1 family. Muscarinic acetylcholine receptor subfamily. CHRM2 sub-subfamily. As to quaternary structure, interacts with ARRB1 and ARRB2. Interacts with RACK1; the interaction regulates CHRM2 internalization. Post-translationally, phosphorylated in response to agonist treatment.

It localises to the cell membrane. It is found in the postsynaptic cell membrane. The muscarinic acetylcholine receptor mediates various cellular responses, including inhibition of adenylate cyclase, breakdown of phosphoinositides and modulation of potassium channels through the action of G proteins. Primary transducing effect is adenylate cyclase inhibition. Signaling promotes phospholipase C activity, leading to the release of inositol trisphosphate (IP3); this then triggers calcium ion release into the cytosol. This chain is Muscarinic acetylcholine receptor M2 (CHRM2), found in Homo sapiens (Human).